The sequence spans 368 residues: Protein RecA (368 aa).

ATP is bound at residue 72–79; the sequence is GNESSGKT.

The protein belongs to the RecA family.

It localises to the cytoplasm. Functionally, can catalyze the hydrolysis of ATP in the presence of single-stranded DNA, the ATP-dependent uptake of single-stranded DNA by duplex DNA, and the ATP-dependent hybridization of homologous single-stranded DNAs. It interacts with LexA causing its activation and leading to its autocatalytic cleavage. The polypeptide is Protein RecA (Petrotoga mobilis (strain DSM 10674 / SJ95)).